The primary structure comprises 237 residues: UPF0502 protein HEAR1280 (237 aa).

Positions 1 to 13 (MNTEVMHSTSTES) are enriched in polar residues. The interval 1-21 (MNTEVMHSTSTESDAQEKPQA) is disordered.

Belongs to the UPF0502 family.

The sequence is that of UPF0502 protein HEAR1280 from Herminiimonas arsenicoxydans.